The primary structure comprises 67 residues: Protein SlyX homolog (67 aa).

The segment covering 48 to 60 (TSAPSTAAESNPQ) has biased composition (polar residues). The interval 48–67 (TSAPSTAAESNPQHEIPPHY) is disordered.

Belongs to the SlyX family.

The protein is Protein SlyX homolog of Cupriavidus pinatubonensis (strain JMP 134 / LMG 1197) (Cupriavidus necator (strain JMP 134)).